The following is a 360-amino-acid chain: Alanine racemase (360 aa).

Lys-33 (proton acceptor; specific for D-alanine) is an active-site residue. Lys-33 bears the N6-(pyridoxal phosphate)lysine mark. Substrate is bound at residue Arg-129. The Proton acceptor; specific for L-alanine role is filled by Tyr-253. Residue Met-301 participates in substrate binding.

This sequence belongs to the alanine racemase family. It depends on pyridoxal 5'-phosphate as a cofactor.

The catalysed reaction is L-alanine = D-alanine. The protein operates within amino-acid biosynthesis; D-alanine biosynthesis; D-alanine from L-alanine: step 1/1. Its function is as follows. Catalyzes the interconversion of L-alanine and D-alanine. May also act on other amino acids. This Xanthomonas campestris pv. campestris (strain 8004) protein is Alanine racemase (alr).